Consider the following 149-residue polypeptide: Large ribosomal subunit protein bL9 (149 aa).

Belongs to the bacterial ribosomal protein bL9 family.

Functionally, binds to the 23S rRNA. The protein is Large ribosomal subunit protein bL9 of Magnetococcus marinus (strain ATCC BAA-1437 / JCM 17883 / MC-1).